We begin with the raw amino-acid sequence, 534 residues long: DNA-directed RNA polymerase III subunit RPC3 (534 aa).

The disordered stretch occupies residues 161-181; the sequence is PSVPTTENSDPGPPPPAPTLV. At S194 the chain carries Phosphoserine. Positions 197–228 are disordered; sequence GKGKRRRSSDEDAAGEPKAKRPKYTTDNKEPI. The segment covering 211 to 228 has biased composition (basic and acidic residues); that stretch reads GEPKAKRPKYTTDNKEPI.

This sequence belongs to the eukaryotic RPC3/POLR3C RNA polymerase subunit family. As to quaternary structure, component of the RNA polymerase III complex consisting of 17 subunits: a ten-subunit horseshoe-shaped catalytic core composed of POLR3A/RPC1, POLR3B/RPC2, POLR1C/RPAC1, POLR1D/RPAC2, POLR3K/RPC10, POLR2E/RPABC1, POLR2F/RPABC2, POLR2H/RPABC3, POLR2K/RPABC4 and POLR2L/RPABC5; a mobile stalk composed of two subunits POLR3H/RPC8 and CRCP/RPC9, protruding from the core and functioning primarily in transcription initiation; and additional subunits homologous to general transcription factors of the RNA polymerase II machinery, POLR3C/RPC3-POLR3F/RPC6-POLR3G/RPC7 heterotrimer required for transcription initiation and POLR3D/RPC4-POLR3E/RPC5 heterodimer involved in both transcription initiation and termination. Directly interacts with POLR3G/RPC7 and POLR3GL. Directly interacts with POLR3F/RPC6. Interacts with GTF3C4. As part of the RNA polymerase III complex, interacts with PKP2.

It is found in the nucleus. Its function is as follows. DNA-dependent RNA polymerase catalyzes the transcription of DNA into RNA using the four ribonucleoside triphosphates as substrates. Specific peripheric component of RNA polymerase III (Pol III) which synthesizes small non-coding RNAs including 5S rRNA, snRNAs, tRNAs and miRNAs from at least 500 distinct genomic loci. Part of POLR3C/RPC3-POLR3F/RPC6-POLR3G/RPC7 heterotrimer, coordinates the dynamics of Pol III stalk and clamp modules during the transition from apo to elongation state. Pol III plays a key role in sensing and limiting infection by intracellular bacteria and DNA viruses. Acts as a nuclear and cytosolic DNA sensor involved in innate immune response. Can sense non-self dsDNA that serves as template for transcription into dsRNA. The non-self RNA polymerase III transcripts, such as Epstein-Barr virus-encoded RNAs (EBERs) induce type I interferon and NF-kappa-B through the RIG-I pathway. Preferentially binds single-stranded DNA (ssDNA) in a sequence-independent manner. This is DNA-directed RNA polymerase III subunit RPC3 from Homo sapiens (Human).